A 413-amino-acid chain; its full sequence is Serine/threonine transporter SstT (413 aa).

A run of 9 helical transmembrane segments spans residues 22 to 42 (GLLLGLLLALIAPSLQGVLGF), 61 to 81 (AVAPILVFLLVISAIANKQLG), 89 to 109 (IVVLYLLGTFLAALTSVLFSF), 148 to 168 (ALFNANFIGILFWAIGLGIAL), 189 to 209 (IVHFIISFAPIGVFGLVAETL), 224 to 244 (LVVLIGSMLFTAFVINPILVF), 305 to 325 (MAGAAITITVLTLAAVHTLGI), 337 to 357 (VVASICACGASGVAGGSLLLI), and 363 to 383 (LFGIPNDIAAQVIGVGFVIGV).

This sequence belongs to the dicarboxylate/amino acid:cation symporter (DAACS) (TC 2.A.23) family.

Its subcellular location is the cell inner membrane. The enzyme catalyses L-serine(in) + Na(+)(in) = L-serine(out) + Na(+)(out). The catalysed reaction is L-threonine(in) + Na(+)(in) = L-threonine(out) + Na(+)(out). Involved in the import of serine and threonine into the cell, with the concomitant import of sodium (symport system). The sequence is that of Serine/threonine transporter SstT from Histophilus somni (strain 129Pt) (Haemophilus somnus).